A 240-amino-acid polypeptide reads, in one-letter code: Protein GrpE (240 aa).

Disordered regions lie at residues 1 to 54 (MSGD…NEAR) and 206 to 240 (VSMGPGPQDGASSQPAEAPAADAPAEDSGSGDGNG). A compositionally biased stretch (low complexity) spans 215 to 233 (GASSQPAEAPAADAPAEDS).

The protein belongs to the GrpE family. As to quaternary structure, homodimer.

The protein resides in the cytoplasm. Its function is as follows. Participates actively in the response to hyperosmotic and heat shock by preventing the aggregation of stress-denatured proteins, in association with DnaK and GrpE. It is the nucleotide exchange factor for DnaK and may function as a thermosensor. Unfolded proteins bind initially to DnaJ; upon interaction with the DnaJ-bound protein, DnaK hydrolyzes its bound ATP, resulting in the formation of a stable complex. GrpE releases ADP from DnaK; ATP binding to DnaK triggers the release of the substrate protein, thus completing the reaction cycle. Several rounds of ATP-dependent interactions between DnaJ, DnaK and GrpE are required for fully efficient folding. This chain is Protein GrpE, found in Synechococcus sp. (strain WH7803).